A 505-amino-acid polypeptide reads, in one-letter code: Deoxyguanosinetriphosphate triphosphohydrolase (505 aa).

Positions 66–273 (RLTHSMEVQQ…MEAADDISYC (208 aa)) constitute an HD domain.

Belongs to the dGTPase family. Type 1 subfamily. In terms of assembly, homotetramer. Requires Mg(2+) as cofactor.

The enzyme catalyses dGTP + H2O = 2'-deoxyguanosine + triphosphate + H(+). DGTPase preferentially hydrolyzes dGTP over the other canonical NTPs. In Escherichia coli O17:K52:H18 (strain UMN026 / ExPEC), this protein is Deoxyguanosinetriphosphate triphosphohydrolase.